A 601-amino-acid polypeptide reads, in one-letter code: Elongation factor 4 (601 aa).

The region spanning 6–188 (NYIRNFSIVA…AIVTQLPSPR (183 aa)) is the tr-type G domain. GTP-binding positions include 18-23 (DHGKST) and 135-138 (NKVD).

The protein belongs to the TRAFAC class translation factor GTPase superfamily. Classic translation factor GTPase family. LepA subfamily.

The protein resides in the cell inner membrane. It carries out the reaction GTP + H2O = GDP + phosphate + H(+). Required for accurate and efficient protein synthesis under certain stress conditions. May act as a fidelity factor of the translation reaction, by catalyzing a one-codon backward translocation of tRNAs on improperly translocated ribosomes. Back-translocation proceeds from a post-translocation (POST) complex to a pre-translocation (PRE) complex, thus giving elongation factor G a second chance to translocate the tRNAs correctly. Binds to ribosomes in a GTP-dependent manner. This chain is Elongation factor 4, found in Bartonella henselae (strain ATCC 49882 / DSM 28221 / CCUG 30454 / Houston 1) (Rochalimaea henselae).